The following is a 243-amino-acid chain: Orotidine 5'-phosphate decarboxylase (243 aa).

Residues Asp19, Lys41, 69 to 78 (DLKFFDIPAT), Thr124, Arg185, Gln194, Gly214, and Arg215 contribute to the substrate site. Catalysis depends on Lys71, which acts as the Proton donor.

It belongs to the OMP decarboxylase family. Type 1 subfamily. As to quaternary structure, homodimer.

It carries out the reaction orotidine 5'-phosphate + H(+) = UMP + CO2. The protein operates within pyrimidine metabolism; UMP biosynthesis via de novo pathway; UMP from orotate: step 2/2. Catalyzes the decarboxylation of orotidine 5'-monophosphate (OMP) to uridine 5'-monophosphate (UMP). The protein is Orotidine 5'-phosphate decarboxylase of Xanthomonas oryzae pv. oryzae (strain MAFF 311018).